The following is a 398-amino-acid chain: Acetate kinase (398 aa).

Asparagine 10 is a binding site for Mg(2+). Lysine 17 contributes to the ATP binding site. Arginine 91 contributes to the substrate binding site. Residue aspartate 148 is the Proton donor/acceptor of the active site. ATP-binding positions include 208–212, 283–285, and 331–335; these read HLGNG, DCR, and GIGEN. Glutamate 385 lines the Mg(2+) pocket.

This sequence belongs to the acetokinase family. In terms of assembly, homodimer. It depends on Mg(2+) as a cofactor. The cofactor is Mn(2+).

The protein resides in the cytoplasm. The enzyme catalyses acetate + ATP = acetyl phosphate + ADP. Its pathway is metabolic intermediate biosynthesis; acetyl-CoA biosynthesis; acetyl-CoA from acetate: step 1/2. Its function is as follows. Catalyzes the formation of acetyl phosphate from acetate and ATP. Can also catalyze the reverse reaction. The polypeptide is Acetate kinase (Shewanella woodyi (strain ATCC 51908 / MS32)).